We begin with the raw amino-acid sequence, 264 residues long: ATP synthase subunit a (264 aa).

6 consecutive transmembrane segments (helical) span residues 29–49 (TWHI…LWIF), 87–107 (NALI…MNFM), 134–154 (DVNI…YYSI), 177–197 (IPVN…SLAL), 208–228 (LIFI…SLGV), and 235–255 (LIFH…LTIV).

The protein belongs to the ATPase A chain family. In terms of assembly, F-type ATPases have 2 components, CF(1) - the catalytic core - and CF(0) - the membrane proton channel. CF(1) has five subunits: alpha(3), beta(3), gamma(1), delta(1), epsilon(1). CF(0) has three main subunits: a(1), b(2) and c(9-12). The alpha and beta chains form an alternating ring which encloses part of the gamma chain. CF(1) is attached to CF(0) by a central stalk formed by the gamma and epsilon chains, while a peripheral stalk is formed by the delta and b chains.

It is found in the cell inner membrane. Key component of the proton channel; it plays a direct role in the translocation of protons across the membrane. The chain is ATP synthase subunit a from Shewanella sp. (strain ANA-3).